The primary structure comprises 144 residues: Ig heavy chain V region M167 (144 aa).

An N-terminal signal peptide occupies residues 1-19 (MKMWLNWVFLLTLLHGIQC). The Ig-like domain maps to 20 to 133 (EVKVVESGGG…GNSYFGYFDV (114 aa)).

The sequence is that of Ig heavy chain V region M167 from Mus musculus (Mouse).